Consider the following 208-residue polypeptide: MKQSLLLSFVLLLLSSSSLVTPIHARNKSNPAKSPVGAPAPGPSSSDCSTVIYSMMDCLGYLGVGSNETKPEKSCCTGIETVLQYNPQCICAGLVSAGEMGIELNSTRALATPKACKLSIAPPHCGIITSGATTPGASPVSPSAGAPTTSPSAAKSPETSATSPSSDETPSMTAPSPSSSGTNILSVPALTIVFVIVSSVAYISAFSN.

Residues 1-25 (MKQSLLLSFVLLLLSSSSLVTPIHA) form the signal peptide. Asn27, Asn67, and Asn105 each carry an N-linked (GlcNAc...) asparagine glycan. Intrachain disulfides connect Cys48/Cys91, Cys58/Cys75, Cys76/Cys116, and Cys89/Cys125. The tract at residues 136–181 (GASPVSPSAGAPTTSPSAAKSPETSATSPSSDETPSMTAPSPSSSG) is disordered. Ser179 is lipidated: GPI-anchor amidated serine. Positions 180–208 (SGTNILSVPALTIVFVIVSSVAYISAFSN) are cleaved as a propeptide — removed in mature form.

Belongs to the plant LTP family. In terms of tissue distribution, confined to the anthers and stamen of the inflorescence, especially in pollen.

The protein localises to the cell membrane. Lipid transfer protein involved in seed and ovule maturation and development, probably by regulating the fatty acids homeostasis during suberin and sporopollenin biosynthesis or deposition. This Arabidopsis thaliana (Mouse-ear cress) protein is Non-specific lipid transfer protein GPI-anchored 4.